Reading from the N-terminus, the 86-residue chain is Acyl carrier protein (86 aa).

The 81-residue stretch at 2 to 82 folds into the Carrier domain; it reads ATVFERVKKV…AVVDYLKSKG (81 aa). The residue at position 37 (Ser37) is an O-(pantetheine 4'-phosphoryl)serine.

It belongs to the acyl carrier protein (ACP) family. 4'-phosphopantetheine is transferred from CoA to a specific serine of apo-ACP by AcpS. This modification is essential for activity because fatty acids are bound in thioester linkage to the sulfhydryl of the prosthetic group.

The protein localises to the cytoplasm. Its pathway is lipid metabolism; fatty acid biosynthesis. Its function is as follows. Carrier of the growing fatty acid chain in fatty acid biosynthesis. The protein is Acyl carrier protein of Dehalococcoides mccartyi (strain ATCC BAA-2266 / KCTC 15142 / 195) (Dehalococcoides ethenogenes (strain 195)).